A 184-amino-acid polypeptide reads, in one-letter code: dCTP deaminase (184 aa).

Residues 107-112 (KSTYAR), 131-133 (TLE), Gln152, Tyr166, and Gln176 each bind dCTP. Catalysis depends on Glu133, which acts as the Proton donor/acceptor.

Belongs to the dCTP deaminase family. Homotrimer.

It carries out the reaction dCTP + H2O + H(+) = dUTP + NH4(+). It participates in pyrimidine metabolism; dUMP biosynthesis; dUMP from dCTP (dUTP route): step 1/2. Catalyzes the deamination of dCTP to dUTP. The protein is dCTP deaminase of Rhizorhabdus wittichii (strain DSM 6014 / CCUG 31198 / JCM 15750 / NBRC 105917 / EY 4224 / RW1) (Sphingomonas wittichii).